Here is a 69-residue protein sequence, read N- to C-terminus: Beta-defensin 1 (69 aa).

Residues 1-21 (MKTHYFLLVMICFLFSQMEPG) form the signal peptide. The propeptide occupies 22-32 (VGILTSLGRRT). Cystine bridges form between Cys-37-Cys-66, Cys-44-Cys-59, and Cys-49-Cys-67.

Belongs to the beta-defensin family. Monomer. Homodimer. In terms of tissue distribution, detected in kidney.

The protein resides in the secreted. The protein localises to the membrane. In terms of biological role, has bactericidal activity. May act as a ligand for C-C chemokine receptor CCR6. Positively regulates the sperm motility and bactericidal activity in a CCR6-dependent manner. Binds to CCR6 and triggers Ca2+ mobilization in the sperm which is important for its motility. This Mus musculus (Mouse) protein is Beta-defensin 1 (Defb1).